A 247-amino-acid chain; its full sequence is 3-deoxy-manno-octulosonate cytidylyltransferase (247 aa).

This sequence belongs to the KdsB family.

Its subcellular location is the cytoplasm. It carries out the reaction 3-deoxy-alpha-D-manno-oct-2-ulosonate + CTP = CMP-3-deoxy-beta-D-manno-octulosonate + diphosphate. Its pathway is nucleotide-sugar biosynthesis; CMP-3-deoxy-D-manno-octulosonate biosynthesis; CMP-3-deoxy-D-manno-octulosonate from 3-deoxy-D-manno-octulosonate and CTP: step 1/1. The protein operates within bacterial outer membrane biogenesis; lipopolysaccharide biosynthesis. In terms of biological role, activates KDO (a required 8-carbon sugar) for incorporation into bacterial lipopolysaccharide in Gram-negative bacteria. In Chlorobium phaeobacteroides (strain DSM 266 / SMG 266 / 2430), this protein is 3-deoxy-manno-octulosonate cytidylyltransferase.